We begin with the raw amino-acid sequence, 575 residues long: Mitochondrial 2-methylisocitrate lyase ICL2 (575 aa).

Cys238 is a catalytic residue.

The protein belongs to the isocitrate lyase/PEP mutase superfamily. Isocitrate lyase family.

The protein resides in the mitochondrion matrix. It carries out the reaction (2S,3R)-3-hydroxybutane-1,2,3-tricarboxylate = pyruvate + succinate. The protein operates within organic acid metabolism; propanoate degradation. In terms of biological role, catalyzes the formation of pyruvate and succinate from 2-methylisocitrate during the metabolism of endogenous propionyl-CoA. Does not act on isocitrate. The protein is Mitochondrial 2-methylisocitrate lyase ICL2 (ICL2) of Saccharomyces cerevisiae (strain ATCC 204508 / S288c) (Baker's yeast).